The chain runs to 213 residues: ER lumen protein-retaining receptor erd-2.1 (213 aa).

Residues 1-2 (MN) lie on the Lumenal side of the membrane. A helical membrane pass occupies residues 3 to 21 (LFRFTADVAHAIAIVVLLL). Over 22-35 (KIWKSRSCEGISGR) the chain is Cytoplasmic. A helical membrane pass occupies residues 36–53 (SQLLFALVFVTRYLDLFT). Over 54 to 61 (NFFSFYNT) the chain is Lumenal. The chain crosses the membrane as a helical span at residues 62–80 (AMKIFYLVASFGTVYLMWA). The Cytoplasmic portion of the chain corresponds to 81–96 (KFKATYDRNNDSFRIE). The helical transmembrane segment at 97–110 (FLVIPSMILALLIN) threads the bilayer. The Lumenal portion of the chain corresponds to 111-117 (HEFIFME). The chain crosses the membrane as a helical span at residues 118 to 137 (VMWTFSIYLEAVAIMPQLFM). At 138–149 (LSRTGNAETITA) the chain is on the cytoplasmic side. A helical transmembrane segment spans residues 150-168 (HYLFALGSYRFLYILNWVY). The Lumenal portion of the chain corresponds to 169-178 (RYYTESFFDP). The helical transmembrane segment at 179-199 (ISVVAGIVQTVLYADFFYLYI) threads the bilayer. At 200–213 (TRVIQSNRQFEMSA) the chain is on the cytoplasmic side.

This sequence belongs to the ERD2 family.

Its subcellular location is the endoplasmic reticulum membrane. Its function is as follows. Required for the retention of luminal endoplasmic reticulum proteins. Determines the specificity of the luminal ER protein retention system. Also required for normal vesicular traffic through the Golgi. The polypeptide is ER lumen protein-retaining receptor erd-2.1 (Caenorhabditis elegans).